The following is a 138-amino-acid chain: Cysteine desulfuration protein SufE (138 aa).

C51 serves as the catalytic Cysteine persulfide intermediate.

Belongs to the SufE family. In terms of assembly, homodimer. Interacts with SufS.

Its subcellular location is the cytoplasm. The protein operates within cofactor biosynthesis; iron-sulfur cluster biosynthesis. Participates in cysteine desulfuration mediated by SufS. Cysteine desulfuration mobilizes sulfur from L-cysteine to yield L-alanine and constitutes an essential step in sulfur metabolism for biosynthesis of a variety of sulfur-containing biomolecules. Functions as a sulfur acceptor for SufS, by mediating the direct transfer of the sulfur atom from the S-sulfanylcysteine of SufS, an intermediate product of cysteine desulfuration process. The polypeptide is Cysteine desulfuration protein SufE (Salmonella arizonae (strain ATCC BAA-731 / CDC346-86 / RSK2980)).